The chain runs to 262 residues: Acyl-[acyl-carrier-protein]--UDP-N-acetylglucosamine O-acyltransferase (262 aa).

The protein belongs to the transferase hexapeptide repeat family. LpxA subfamily. In terms of assembly, homotrimer.

It localises to the cytoplasm. The enzyme catalyses a (3R)-hydroxyacyl-[ACP] + UDP-N-acetyl-alpha-D-glucosamine = a UDP-3-O-[(3R)-3-hydroxyacyl]-N-acetyl-alpha-D-glucosamine + holo-[ACP]. Its pathway is glycolipid biosynthesis; lipid IV(A) biosynthesis; lipid IV(A) from (3R)-3-hydroxytetradecanoyl-[acyl-carrier-protein] and UDP-N-acetyl-alpha-D-glucosamine: step 1/6. In terms of biological role, involved in the biosynthesis of lipid A, a phosphorylated glycolipid that anchors the lipopolysaccharide to the outer membrane of the cell. This is Acyl-[acyl-carrier-protein]--UDP-N-acetylglucosamine O-acyltransferase from Salmonella typhi.